We begin with the raw amino-acid sequence, 311 residues long: ADP-L-glycero-D-manno-heptose-6-epimerase (311 aa).

NADP(+) is bound by residues phenylalanine 10–isoleucine 11, aspartate 31–aspartate 32, lysine 38, lysine 53, glutamate 75–serine 79, and asparagine 92. Tyrosine 139 serves as the catalytic Proton acceptor. Position 143 (lysine 143) interacts with NADP(+). Asparagine 174 contributes to the substrate binding site. Residues valine 175 and lysine 183 each coordinate NADP(+). Catalysis depends on lysine 183, which acts as the Proton acceptor. Substrate contacts are provided by residues serine 185, histidine 192, phenylalanine 206 to glutamate 209, arginine 212, and tyrosine 275.

Belongs to the NAD(P)-dependent epimerase/dehydratase family. HldD subfamily. In terms of assembly, homopentamer. NADP(+) serves as cofactor.

The catalysed reaction is ADP-D-glycero-beta-D-manno-heptose = ADP-L-glycero-beta-D-manno-heptose. It functions in the pathway nucleotide-sugar biosynthesis; ADP-L-glycero-beta-D-manno-heptose biosynthesis; ADP-L-glycero-beta-D-manno-heptose from D-glycero-beta-D-manno-heptose 7-phosphate: step 4/4. In terms of biological role, catalyzes the interconversion between ADP-D-glycero-beta-D-manno-heptose and ADP-L-glycero-beta-D-manno-heptose via an epimerization at carbon 6 of the heptose. The polypeptide is ADP-L-glycero-D-manno-heptose-6-epimerase (Psychromonas ingrahamii (strain DSM 17664 / CCUG 51855 / 37)).